We begin with the raw amino-acid sequence, 336 residues long: Tyrosine recombinase XerC (336 aa).

One can recognise a Core-binding (CB) domain in the interval 14–106 (VARCRWLEPF…SVKSFYRFLL (93 aa)). The Tyr recombinase domain occupies 127–330 (KVPRFVSEEE…TFSRLKEIYD (204 aa)). Residues Arg183, Lys207, His282, Arg285, and His308 contribute to the active site. Tyr317 acts as the O-(3'-phospho-DNA)-tyrosine intermediate in catalysis.

This sequence belongs to the 'phage' integrase family. XerC subfamily. As to quaternary structure, forms a cyclic heterotetrameric complex composed of two molecules of XerC and two molecules of XerD.

It localises to the cytoplasm. Site-specific tyrosine recombinase, which acts by catalyzing the cutting and rejoining of the recombining DNA molecules. The XerC-XerD complex is essential to convert dimers of the bacterial chromosome into monomers to permit their segregation at cell division. It also contributes to the segregational stability of plasmids. The protein is Tyrosine recombinase XerC of Chlorobaculum parvum (strain DSM 263 / NCIMB 8327) (Chlorobium vibrioforme subsp. thiosulfatophilum).